Consider the following 209-residue polypeptide: Small ribosomal subunit protein uS3 (209 aa).

Positions 38 to 107 (IRKFIKNRYY…RVVINIEEIK (70 aa)) constitute a KH type-2 domain.

This sequence belongs to the universal ribosomal protein uS3 family. As to quaternary structure, part of the 30S ribosomal subunit. Forms a tight complex with proteins S10 and S14.

In terms of biological role, binds the lower part of the 30S subunit head. Binds mRNA in the 70S ribosome, positioning it for translation. The sequence is that of Small ribosomal subunit protein uS3 from Thermotoga petrophila (strain ATCC BAA-488 / DSM 13995 / JCM 10881 / RKU-1).